We begin with the raw amino-acid sequence, 130 residues long: Albumin-1 F (130 aa).

The N-terminal stretch at M1–A26 is a signal peptide. 3 disulfide bridges follow: C29–C46, C33–C48, and C41–C58. 2 propeptides span residues V64–N69 and L123–A130.

In terms of processing, the C-terminal glycine may be removed from PA1b.

Functionally, PA1b binds to basic 7S globulin (BG) and stimulates its phosphorylation activity. Involved in the signal transduction system to regulate the growth and differentiation as a hormone peptide. Toxic to various insects through binding to a high affinity binding site in the insect gut. This Pisum sativum (Garden pea) protein is Albumin-1 F.